We begin with the raw amino-acid sequence, 500 residues long: Na(+)/H(+) antiporter NhaB (500 aa).

A run of 13 helical transmembrane segments spans residues 11–31 (HGFLGQSPLWYKAVICLFLVL), 34–54 (LLLATIGPAAAGWALVIEFIF), 58–78 (MALKCYPLMPGGLLLIEALLL), 96–116 (VILLLMFMVAGIHFMKELLLF), 121–141 (ILLGVRSKAMLSLLFCVLSAF), 145–165 (FLDALTVTAVIISAAVGFYAV), 205–225 (LLMHGAVGTALGGVCTLVGEP), 241–261 (FLLKVAPVSIPVLGAGLLTCV), 311–331 (ILIICLGLHVAEVGLIGLMVI), 350–370 (FQDAMPFTSLLVVFFAVVAVI), 394–414 (MLYLANGLLSAISDNVFVATI), 450–470 (ATPNGQAAFLFLLTSAIAPLI), and 477–497 (MVWMALPYTVVMGGLGWWAVT).

Belongs to the NhaB Na(+)/H(+) (TC 2.A.34) antiporter family.

It is found in the cell inner membrane. It carries out the reaction 2 Na(+)(in) + 3 H(+)(out) = 2 Na(+)(out) + 3 H(+)(in). Functionally, na(+)/H(+) antiporter that extrudes sodium in exchange for external protons. This is Na(+)/H(+) antiporter NhaB from Pseudomonas putida (strain ATCC 700007 / DSM 6899 / JCM 31910 / BCRC 17059 / LMG 24140 / F1).